The sequence spans 362 residues: Aminomethyltransferase (362 aa).

The protein belongs to the GcvT family. As to quaternary structure, the glycine cleavage system is composed of four proteins: P, T, L and H.

It catalyses the reaction N(6)-[(R)-S(8)-aminomethyldihydrolipoyl]-L-lysyl-[protein] + (6S)-5,6,7,8-tetrahydrofolate = N(6)-[(R)-dihydrolipoyl]-L-lysyl-[protein] + (6R)-5,10-methylene-5,6,7,8-tetrahydrofolate + NH4(+). Functionally, the glycine cleavage system catalyzes the degradation of glycine. In Porphyromonas gingivalis (strain ATCC 33277 / DSM 20709 / CIP 103683 / JCM 12257 / NCTC 11834 / 2561), this protein is Aminomethyltransferase.